Consider the following 231-residue polypeptide: 5'-methylthioadenosine/S-adenosylhomocysteine nucleosidase (231 aa).

The Proton acceptor role is filled by Glu12. Substrate is bound by residues Gly78, Met153, and 174–175 (ME). Asp198 (proton donor) is an active-site residue.

This sequence belongs to the PNP/UDP phosphorylase family. MtnN subfamily.

It carries out the reaction S-adenosyl-L-homocysteine + H2O = S-(5-deoxy-D-ribos-5-yl)-L-homocysteine + adenine. It catalyses the reaction S-methyl-5'-thioadenosine + H2O = 5-(methylsulfanyl)-D-ribose + adenine. The enzyme catalyses 5'-deoxyadenosine + H2O = 5-deoxy-D-ribose + adenine. The protein operates within amino-acid biosynthesis; L-methionine biosynthesis via salvage pathway; S-methyl-5-thio-alpha-D-ribose 1-phosphate from S-methyl-5'-thioadenosine (hydrolase route): step 1/2. Catalyzes the irreversible cleavage of the glycosidic bond in both 5'-methylthioadenosine (MTA) and S-adenosylhomocysteine (SAH/AdoHcy) to adenine and the corresponding thioribose, 5'-methylthioribose and S-ribosylhomocysteine, respectively. Also cleaves 5'-deoxyadenosine, a toxic by-product of radical S-adenosylmethionine (SAM) enzymes, into 5-deoxyribose and adenine. The protein is 5'-methylthioadenosine/S-adenosylhomocysteine nucleosidase of Bacillus velezensis (strain DSM 23117 / BGSC 10A6 / LMG 26770 / FZB42) (Bacillus amyloliquefaciens subsp. plantarum).